Here is a 197-residue protein sequence, read N- to C-terminus: Thymidine kinase (197 aa).

Residues 15–22 (GPMFAGKT) and 93–96 (DEVQ) each bind ATP. Catalysis depends on glutamate 94, which acts as the Proton acceptor. The Zn(2+) site is built by cysteine 150, cysteine 153, cysteine 188, and histidine 191.

It belongs to the thymidine kinase family. As to quaternary structure, homotetramer.

It localises to the cytoplasm. The catalysed reaction is thymidine + ATP = dTMP + ADP + H(+). This chain is Thymidine kinase, found in Thermococcus kodakarensis (strain ATCC BAA-918 / JCM 12380 / KOD1) (Pyrococcus kodakaraensis (strain KOD1)).